A 304-amino-acid chain; its full sequence is Acetylglutamate kinase (304 aa).

Residues 82 to 83, arginine 104, and asparagine 197 contribute to the substrate site; that span reads GG.

It belongs to the acetylglutamate kinase family. ArgB subfamily.

Its subcellular location is the cytoplasm. It catalyses the reaction N-acetyl-L-glutamate + ATP = N-acetyl-L-glutamyl 5-phosphate + ADP. It participates in amino-acid biosynthesis; L-arginine biosynthesis; N(2)-acetyl-L-ornithine from L-glutamate: step 2/4. Its function is as follows. Catalyzes the ATP-dependent phosphorylation of N-acetyl-L-glutamate. This Prochlorococcus marinus (strain NATL2A) protein is Acetylglutamate kinase.